Here is a 324-residue protein sequence, read N- to C-terminus: Acetyl-coenzyme A carboxylase carboxyl transferase subunit alpha (324 aa).

One can recognise a CoA carboxyltransferase C-terminal domain in the interval 37 to 291; the sequence is ILEEKLENLE…DLMIQKTFQQ (255 aa).

This sequence belongs to the AccA family. As to quaternary structure, acetyl-CoA carboxylase is a heterohexamer composed of biotin carboxyl carrier protein (AccB), biotin carboxylase (AccC) and two subunits each of ACCase subunit alpha (AccA) and ACCase subunit beta (AccD).

Its subcellular location is the cytoplasm. It carries out the reaction N(6)-carboxybiotinyl-L-lysyl-[protein] + acetyl-CoA = N(6)-biotinyl-L-lysyl-[protein] + malonyl-CoA. It functions in the pathway lipid metabolism; malonyl-CoA biosynthesis; malonyl-CoA from acetyl-CoA: step 1/1. In terms of biological role, component of the acetyl coenzyme A carboxylase (ACC) complex. First, biotin carboxylase catalyzes the carboxylation of biotin on its carrier protein (BCCP) and then the CO(2) group is transferred by the carboxyltransferase to acetyl-CoA to form malonyl-CoA. In Bacillus cereus (strain ATCC 14579 / DSM 31 / CCUG 7414 / JCM 2152 / NBRC 15305 / NCIMB 9373 / NCTC 2599 / NRRL B-3711), this protein is Acetyl-coenzyme A carboxylase carboxyl transferase subunit alpha.